We begin with the raw amino-acid sequence, 123 residues long: Large ribosomal subunit protein eL8 (123 aa).

This sequence belongs to the eukaryotic ribosomal protein eL8 family. In terms of assembly, part of the 50S ribosomal subunit. Probably part of the RNase P complex.

The protein localises to the cytoplasm. Multifunctional RNA-binding protein that recognizes the K-turn motif in ribosomal RNA, the RNA component of RNase P, box H/ACA, box C/D and box C'/D' sRNAs. The polypeptide is Large ribosomal subunit protein eL8 (Methanosphaera stadtmanae (strain ATCC 43021 / DSM 3091 / JCM 11832 / MCB-3)).